The sequence spans 712 residues: MSRSINLDELRKKALESKKKNEEDESNDSDKEDGEISEDDPVIDQSNSVPPMKVPTFPEQIPQLPPFDRFPGTNANFFPFGAPFMLPPALMFGPNTVPFFPQTASSNKTFSKRKRSSENSFNNRNKAKSSETSDSSNTSQSFKENRALKDTATSRPLALSSDTSYQKSEKAKSEKSPFLSTSKNSDANYSKTTNQKEAEKAVSQLFEVGVRFNDFIAEGIEPSVVHTLFLKLGLDSSSASSQGSLTLSADKAARSAKLRKIDSNLSDTHILPGDNGTPTVLPERKNLISLPLLKQDDWLSSSKPFGSSTPNVVIEFDSDDDGDDFSNSKIEQSNLEKPPSNSENGLTMSRSDYLALLRNKEEEIRRMTKLILRLESNKKPYRSPTSAADMKLPSVPVAAVDNKSKTHLDTFEKVVDLSSKADFVEAGPSISSSGASSSAATTNSDTTEQILEAPWLRKTEQIAVVHEEHPAQIKKSEIDILNNLIEKEEGELTKYQTLVKSKTEILTQLYTRKKQLLEQQGKGNVACLPKESDLSMDSITEVSAQADENSSQILSSKTSNAPNGTTETDFEDKVPLVDYISPFYRFKSYRFNQQFVERVPLKYRSLTYSNKIEPMKVFCKYETTGGVCNDDHCEASHFRDIKMTDDEIIQDLSRYIEGNDEIEKESYKSGLDIVMKNTDENTDFVDVATRIVEYHNLWKSERMTIPVAKVSI.

Positions 1-22 (MSRSINLDELRKKALESKKKNE) are enriched in basic and acidic residues. Disordered regions lie at residues 1–71 (MSRS…DRFP), 107–195 (NKTF…TTNQ), and 323–348 (DDFS…GLTM). The stretch at 5-32 (INLDELRKKALESKKKNEEDESNDSDKE) forms a coiled coil. Residues 23 to 42 (EDESNDSDKEDGEISEDDPV) are compositionally biased toward acidic residues. Residues 130–141 (SETSDSSNTSQS) show a composition bias toward low complexity. Polar residues-rich tracts occupy residues 178-193 (FLST…SKTT) and 327-348 (NSKI…GLTM). Positions 351–379 (SDYLALLRNKEEEIRRMTKLILRLESNKK) form a coiled coil. The disordered stretch occupies residues 428 to 447 (PSISSSGASSSAATTNSDTT). A coiled-coil region spans residues 471–501 (AQIKKSEIDILNNLIEKEEGELTKYQTLVKS). The span at 545 to 567 (QADENSSQILSSKTSNAPNGTTE) shows a compositional bias: polar residues. Residues 545–568 (QADENSSQILSSKTSNAPNGTTET) are disordered. A C3H1-type zinc finger spans residues 618–639 (FCKYETTGGVCNDDHCEASHFR).

As to quaternary structure, interacts with mmi1, pla1 and rrp6.

It is found in the nucleus. Functionally, promotes the exosome-mediated degradation of mRNAs containing a DSR (determinant of selective removal) signal sequence from mitotic cells. This Schizosaccharomyces pombe (strain 972 / ATCC 24843) (Fission yeast) protein is NURS complex subunit red1.